We begin with the raw amino-acid sequence, 893 residues long: Ubiquitin-like protease 2 (893 aa).

A protease region spans residues 538–800; the sequence is PVVLLVKDIK…YNLILQQADK (263 aa). Residues histidine 644, aspartate 678, and cysteine 743 contribute to the active site.

This sequence belongs to the peptidase C48 family.

The protein localises to the nucleus. Its subcellular location is the cytoplasm. The protein resides in the cytosol. Functionally, protease that catalyzes two essential functions in the smo-1 pathway: processing of full-length smo-1 to their mature forms and deconjugation of smo-1 from targeted proteins. May deconjugate smo-1 from the cadherin protein hmr-1 and plays a role in its recruitment to and the maintenance of adherens junctions. Required for epidermal morphogenesis during embryonic development. The chain is Ubiquitin-like protease 2 from Caenorhabditis elegans.